We begin with the raw amino-acid sequence, 465 residues long: Mitochondrial F-box protein MFB1 (465 aa).

Positions 14 to 60 (ERSLTNLPLNLLFRILSHLDMNDLQNIGKTCTLLRMLANENIVYRNA) constitute an F-box domain. Residues 253 to 279 (FTKSRDPDYKEMTPTSTESSDSITRLR) are disordered. The segment covering 254–263 (TKSRDPDYKE) has biased composition (basic and acidic residues). Over residues 265–275 (TPTSTESSDSI) the composition is skewed to polar residues.

It localises to the mitochondrion. The chain is Mitochondrial F-box protein MFB1 (MFB1) from Saccharomyces cerevisiae (strain ATCC 204508 / S288c) (Baker's yeast).